The sequence spans 227 residues: MYLLIPAAGIGKRMGSNRNKLLLKVRSQPIIAWTLLAAEAANTISWIGIISQPTDWPDFRAILADLKLTKPVELIQGGSTRQESVYNGLQALPLAAEQVLIHDGARCLATPDLFNSCAQAIRHCPGLIAGVPVKDTIKVVDEQGIIQETPDRQKLWAAQTPQGFDVKLLKQCHAEGVRQGWEVTDDAALFEKCGIEVRIVEGEETNLKVTTPQDLAIAEFILTTRGV.

This sequence belongs to the IspD/TarI cytidylyltransferase family. IspD subfamily.

The enzyme catalyses 2-C-methyl-D-erythritol 4-phosphate + CTP + H(+) = 4-CDP-2-C-methyl-D-erythritol + diphosphate. The protein operates within isoprenoid biosynthesis; isopentenyl diphosphate biosynthesis via DXP pathway; isopentenyl diphosphate from 1-deoxy-D-xylulose 5-phosphate: step 2/6. Functionally, catalyzes the formation of 4-diphosphocytidyl-2-C-methyl-D-erythritol from CTP and 2-C-methyl-D-erythritol 4-phosphate (MEP). The protein is 2-C-methyl-D-erythritol 4-phosphate cytidylyltransferase of Nostoc punctiforme (strain ATCC 29133 / PCC 73102).